Reading from the N-terminus, the 541-residue chain is Carboxypeptidase Y homolog A (541 aa).

An N-terminal signal peptide occupies residues 1–17; the sequence is MKTFTAALLVGTALAAV. A propeptide spanning residues 18–122 is cleaved from the precursor; it reads PQQQPLQTQV…KLENYDLRVK (105 aa). Intrachain disulfides connect Cys-177–Cys-416, Cys-311–Cys-325, Cys-335–Cys-358, Cys-342–Cys-351, and Cys-380–Cys-386. N-linked (GlcNAc...) asparagine glycosylation occurs at Asn-208. Ser-264 is a catalytic residue. Residue Asp-455 is part of the active site. 3 N-linked (GlcNAc...) asparagine glycosylation sites follow: Asn-485, Asn-491, and Asn-506. Residue His-517 is part of the active site.

The protein belongs to the peptidase S10 family.

It localises to the vacuole. The enzyme catalyses Release of a C-terminal amino acid with broad specificity.. Its function is as follows. Vacuolar carboxypeptidase involved in degradation of small peptides. Digests preferentially peptides containing an aliphatic or hydrophobic residue in P1' position, as well as methionine, leucine or phenylalanine in P1 position of ester substrate. This Uncinocarpus reesii (strain UAMH 1704) protein is Carboxypeptidase Y homolog A (cpyA).